A 500-amino-acid chain; its full sequence is L-arabinose isomerase (500 aa).

The Mn(2+) site is built by E306, E333, H350, and H450.

Belongs to the arabinose isomerase family. As to quaternary structure, homohexamer. Mn(2+) is required as a cofactor.

The enzyme catalyses beta-L-arabinopyranose = L-ribulose. The protein operates within carbohydrate degradation; L-arabinose degradation via L-ribulose; D-xylulose 5-phosphate from L-arabinose (bacterial route): step 1/3. Catalyzes the conversion of L-arabinose to L-ribulose. This is L-arabinose isomerase from Klebsiella pneumoniae subsp. pneumoniae (strain ATCC 700721 / MGH 78578).